A 401-amino-acid chain; its full sequence is L-rhamnonate dehydratase (401 aa).

The substrate site is built by histidine 29 and arginine 55. The Mg(2+) site is built by aspartate 222, glutamate 248, and glutamate 276. Histidine 325 functions as the Proton acceptor in the catalytic mechanism. A substrate-binding site is contributed by glutamate 345.

It belongs to the mandelate racemase/muconate lactonizing enzyme family. RhamD subfamily. Homooctamer; tetramer of dimers. It depends on Mg(2+) as a cofactor.

It carries out the reaction L-rhamnonate = 2-dehydro-3-deoxy-L-rhamnonate + H2O. Catalyzes the dehydration of L-rhamnonate to 2-keto-3-deoxy-L-rhamnonate (KDR). This chain is L-rhamnonate dehydratase, found in Klebsiella pneumoniae (strain 342).